A 153-amino-acid chain; its full sequence is Insulin-like growth factor 1 (153 aa).

Positions 49–77 are b; the sequence is GPETLCGAELVDALQFVCGDRGFYFNKPT. Disulfide bonds link C54–C96, C66–C109, and C95–C100. Residues 78–89 form a c region; the sequence is GYGSSSRRAPQT. The interval 90–110 is a; it reads GIVDECCFRSCDLRRLEMYCA. Residues 111-118 are d; that stretch reads PLKPAKSA. Residues 119-153 constitute a propeptide, e peptide; that stretch reads RSVRAQRHTDMPKAQKEVHLKNASRGSAGNKNYRM. Residues 120 to 153 form a disordered region; that stretch reads SVRAQRHTDMPKAQKEVHLKNASRGSAGNKNYRM. Basic and acidic residues predominate over residues 125-138; that stretch reads RHTDMPKAQKEVHL. Polar residues predominate over residues 142–153; that stretch reads SRGSAGNKNYRM.

It belongs to the insulin family. In terms of assembly, forms a ternary complex with IGFR1 and ITGAV:ITGB3. Forms a ternary complex with IGFR1 and ITGA6:ITGB4. Forms a ternary complex with IGFBP3 and ALS.

The protein resides in the secreted. In terms of biological role, the insulin-like growth factors, isolated from plasma, are structurally and functionally related to insulin but have a much higher growth-promoting activity. May be a physiological regulator of [1-14C]-2-deoxy-D-glucose (2DG) transport and glycogen synthesis in osteoblasts. Stimulates glucose transport in bone-derived osteoblastic (PyMS) cells and is effective at much lower concentrations than insulin, not only regarding glycogen and DNA synthesis but also with regard to enhancing glucose uptake. May play a role in synapse maturation. Ca(2+)-dependent exocytosis of IGF1 is required for sensory perception of smell in the olfactory bulb. Acts as a ligand for IGF1R. Binds to the alpha subunit of IGF1R, leading to the activation of the intrinsic tyrosine kinase activity which autophosphorylates tyrosine residues in the beta subunit thus initiating a cascade of down-stream signaling events leading to activation of the PI3K-AKT/PKB and the Ras-MAPK pathways. Binds to integrins ITGAV:ITGB3 and ITGA6:ITGB4. Its binding to integrins and subsequent ternary complex formation with integrins and IGFR1 are essential for IGF1 signaling. Induces the phosphorylation and activation of IGFR1, MAPK3/ERK1, MAPK1/ERK2 and AKT1. As part of the MAPK/ERK signaling pathway, acts as a negative regulator of apoptosis in cardiomyocytes via promotion of STUB1/CHIP-mediated ubiquitination and degradation of ICER-type isoforms of CREM. The polypeptide is Insulin-like growth factor 1 (Rhinopithecus roxellana (Golden snub-nosed monkey)).